The sequence spans 294 residues: Type 4 apparatus protein DotZ (294 aa).

As to quaternary structure, the T4BSS is a complex nanomachine composed of several subcomplexes. This subunit is part of the Type IV Coupling Complex (T4CC), a subcomplex composed of the DotLMNYZ core and the IcmSW-LvgA adapter subunits, linked by the C-terminal tail of DotL. Six DotLMNYZ hetero-pentameric units may assemble into a hexameric nanomachine, forming an inner membrane channel for effectors to pass through. Makes significant contact with DotN and DotY, but engages weakly with DotM and DotL. DotY and DotZ are co-dependent for the assembly into the T4CC.

It is found in the cytoplasm. Functionally, component of the Dot/Icm type IVB secretion system (T4BSS), which is used to inject bacterial effector proteins into eukaryotic host cells. Part of a subcomplex which recruits effector proteins and delivers them to the core transmembrane subcomplex. DotY and DotZ play a role in effector translocation, but are not essential and do not influence the stability of the subcomplex main components. The DotY/DotZ main function is to optimize secretion by modulating the delivery trajectory of the IcmSW module and the localization of the machinery to the poles. The sequence is that of Type 4 apparatus protein DotZ from Legionella pneumophila subsp. pneumophila (strain Philadelphia 1 / ATCC 33152 / DSM 7513).